The primary structure comprises 188 residues: GTP cyclohydrolase 1 (188 aa).

Zn(2+) contacts are provided by C76, H79, and C148.

This sequence belongs to the GTP cyclohydrolase I family. In terms of assembly, homomer.

The enzyme catalyses GTP + H2O = 7,8-dihydroneopterin 3'-triphosphate + formate + H(+). Its pathway is cofactor biosynthesis; 7,8-dihydroneopterin triphosphate biosynthesis; 7,8-dihydroneopterin triphosphate from GTP: step 1/1. The polypeptide is GTP cyclohydrolase 1 (Thermoanaerobacter pseudethanolicus (strain ATCC 33223 / 39E) (Clostridium thermohydrosulfuricum)).